The following is a 645-amino-acid chain: UvrABC system protein C (645 aa).

Positions 1-20 (MTDLPPHSSHHPADQGEPLV) are disordered. One can recognise a GIY-YIG domain in the interval 40–118 (YSPGVYRMLS…IKRMKPRFNI (79 aa)). One can recognise a UVR domain in the interval 228–263 (TELQQRLVAEMEQASQELNYERAASIRDRIRGFASI).

This sequence belongs to the UvrC family. As to quaternary structure, interacts with UvrB in an incision complex.

The protein localises to the cytoplasm. Its function is as follows. The UvrABC repair system catalyzes the recognition and processing of DNA lesions. UvrC both incises the 5' and 3' sides of the lesion. The N-terminal half is responsible for the 3' incision and the C-terminal half is responsible for the 5' incision. The chain is UvrABC system protein C from Gluconobacter oxydans (strain 621H) (Gluconobacter suboxydans).